The chain runs to 76 residues: Conotoxin ArMKLT2-032 (76 aa).

An N-terminal signal peptide occupies residues 1–22 (MKLTCVLIIAVLFLTACQLTTG). The propeptide occupies 23 to 46 (ETYSRGEQKDHALRSTDKNSKLTR). At Gln-47 the chain carries Pyrrolidone carboxylic acid. Intrachain disulfides connect Cys-48–Cys-62, Cys-55–Cys-66, and Cys-61–Cys-73.

It belongs to the conotoxin O1 superfamily. In terms of tissue distribution, expressed by the venom duct.

Its subcellular location is the secreted. In Conus arenatus (Sand-dusted cone), this protein is Conotoxin ArMKLT2-032.